Consider the following 465-residue polypeptide: Apolipoprotein N-acyltransferase (465 aa).

A run of 6 helical transmembrane segments spans residues 12–32, 49–69, 80–100, 122–142, 161–181, and 189–209; these read AVLG…LSML, ALWG…LHPL, LPVA…LLLL, LLAL…LFWI, WLGS…LWQL, and CAWW…SLSP. In terms of domain architecture, CN hydrolase spans 221-448; sequence WQPAIPTREK…DAVAAAELQR (228 aa). E262 acts as the Proton acceptor in catalysis. K312 is a catalytic residue. C360 functions as the Nucleophile in the catalytic mechanism.

Belongs to the CN hydrolase family. Apolipoprotein N-acyltransferase subfamily.

The protein resides in the cell inner membrane. The enzyme catalyses N-terminal S-1,2-diacyl-sn-glyceryl-L-cysteinyl-[lipoprotein] + a glycerophospholipid = N-acyl-S-1,2-diacyl-sn-glyceryl-L-cysteinyl-[lipoprotein] + a 2-acyl-sn-glycero-3-phospholipid + H(+). The protein operates within protein modification; lipoprotein biosynthesis (N-acyl transfer). Functionally, catalyzes the phospholipid dependent N-acylation of the N-terminal cysteine of apolipoprotein, the last step in lipoprotein maturation. The chain is Apolipoprotein N-acyltransferase from Parasynechococcus marenigrum (strain WH8102).